The chain runs to 355 residues: Apyrase apy-1 (355 aa).

Residues 1-6 (MTQESN) lie on the Cytoplasmic side of the membrane. The helical; Signal-anchor for type II membrane protein transmembrane segment at 7–29 (SNFFNFLLFGFVTAIAFYSGTQF) threads the bilayer. Asparagine 30 carries N-linked (GlcNAc...) asparagine glycosylation. Residues 30–355 (NKSSEQEEHI…PYKYEGIAFA (326 aa)) are Lumenal-facing. Ca(2+) is bound by residues serine 119, glutamate 166, and glutamate 235. A glycan (N-linked (GlcNAc...) asparagine) is linked at asparagine 291. Position 350 (glutamate 350) interacts with Ca(2+).

The protein belongs to the apyrase family. It depends on Ca(2+) as a cofactor.

The protein resides in the endomembrane system. The catalysed reaction is a ribonucleoside 5'-diphosphate + H2O = a ribonucleoside 5'-phosphate + phosphate + H(+). In terms of biological role, hydrolyzes UDP and to a lesser extent GDP. By preventing the accumulation of NDP, may promote the reglucosylation of incompletely folded glycoproteins in the endoplasmic reticulum following the unfolded protein response. The protein is Apyrase apy-1 of Caenorhabditis elegans.